We begin with the raw amino-acid sequence, 43 residues long: Protein PsbN (43 aa).

The helical transmembrane segment at 7 to 27 (ITIFLSCFLVGVTGYALYTAF) threads the bilayer.

This sequence belongs to the PsbN family.

It is found in the plastid. The protein localises to the chloroplast thylakoid membrane. May play a role in photosystem I and II biogenesis. The chain is Protein PsbN from Klebsormidium bilatum (Filamentous green alga).